We begin with the raw amino-acid sequence, 74 residues long: Probable molt-inhibiting hormone (74 aa).

3 disulfides stabilise this stretch: Cys6–Cys43, Cys23–Cys39, and Cys26–Cys52. Alanine amide is present on Ala74.

The protein resides in the secreted. In terms of biological role, inhibits Y-organs where molting hormone (ecdysteroid) is secreted. A molting cycle is initiated when MIH secretion diminishes or stops. Has little or no hyperglycemic activity. This is Probable molt-inhibiting hormone from Jasus lalandii (Cape rock lobster).